A 69-amino-acid polypeptide reads, in one-letter code: Small integral membrane protein 20 (69 aa).

Topologically, residues 1–8 (MAAARNLR) are mitochondrial matrix. The helical transmembrane segment at 9–29 (TALIFGGFISMVGAAFYPIYF) threads the bilayer. Residues 30 to 69 (RPLMRLEEYQKEQAVNRAGIVQEDVQPPGLKVWSDPFGRK) are Mitochondrial intermembrane-facing. A Phenylalanine amide modification is found at phenylalanine 66.

As to quaternary structure, component of the MITRAC (mitochondrial translation regulation assembly intermediate of cytochrome c oxidase complex) complex, the core components of this complex being COA3/MITRAC12 and COX14. Interacts with COA3/MITRAC12 and COX4I1. Directly interacts with newly synthesized MT-CO1/COX1. Highly expressed in the hypothalamus, the spinal cord, and sensory ganglia (at protein level). Also expressed on in the epidermis and dermis layers of the skin (at protein level). Expressed in preadipocytes and adipocytes (at protein level). Expressed in the ovary, specifically in granulosa cells of follicles that have passed the primary stage and in oocytes (at protein level).

The protein localises to the mitochondrion inner membrane. It is found in the secreted. Component of the MITRAC (mitochondrial translation regulation assembly intermediate of cytochrome c oxidase complex) complex, that regulates cytochrome c oxidase assembly. Promotes the progression of complex assembly after the association of MT-CO1/COX1 with COX4I1 and COX6C. Chaperone-like assembly factor required to stabilize newly synthesized MT-CO1/COX1 and to prevent its premature turnover. In terms of biological role, peptide involved in a broad spectrum of regulatory functions. Is a ligand for GPR173. As part of the reproductive cycle, it regulates gonadotropin-releasing hormone (GnRH) signaling in the hypothalamus and pituitary gland which augments the release of luteinizing hormone. More specifically, it regulates the expression of transcription factors CEBPB and POU2F1/OCT1 through the cAMP-PKA signaling pathway, which subsequently regulate the expression of GNRHR and KISS1. Plays a protective role in memory retention through activation of GNRHR. Regulates the secretion of AVP by hypothalamic neurons. Plays a role in the transduction of the itch sensation. Induces anxiolytic effects, reducing behavior associated with anxiety. Regulates food intake as well as satiation and satiety by increasing Nucb2 expression in neurons. In the ovary, it regulates follicular growth by stimulating granulosa cell proliferation by increasing the expression of GPR173, CREB1, CYP19A1, KITLG, FSHR, and LHCGR. It also increases the production of estradiol (E2). In the heart, it regulates contractility and relaxation by activating the AKT1-NOS3 and MAPK1-MAPK3 signaling pathways. It also plays a cardioprotective role during ischemia, where it activates the SAFE and RISK pathways. Stimulates the proliferation and differentiation of preadipocytes. In pancreatic islet cells, it induces proliferation of islet cells as well as the production of INS through activation of the MAPK1-MAPK3 signaling pathways. This Mus musculus (Mouse) protein is Small integral membrane protein 20.